The chain runs to 213 residues: Probable lipid phosphate phosphatase beta (213 aa).

5 helical membrane passes run 30 to 50 (PFLPPFVLLLLEISADFRFSF), 67 to 87 (VPFLLGLLFDLIFVGIVKLIF), 118 to 138 (VFFVAASVHFFSAAAEASMTG), 158 to 178 (VEVVVVVWIWATVTAISRILL), and 181 to 201 (HYVLDVAAGAFLGIVEALFAL).

The protein belongs to the PA-phosphatase related phosphoesterase family.

It localises to the membrane. The sequence is that of Probable lipid phosphate phosphatase beta (LPPB) from Arabidopsis thaliana (Mouse-ear cress).